A 59-amino-acid polypeptide reads, in one-letter code: Large ribosomal subunit protein bL32 (59 aa).

Over residues 1–19 (MAQPKKKTSKSRRNMRRSH) the composition is skewed to basic residues. The interval 1-20 (MAQPKKKTSKSRRNMRRSHD) is disordered.

It belongs to the bacterial ribosomal protein bL32 family.

This is Large ribosomal subunit protein bL32 from Maridesulfovibrio salexigens (strain ATCC 14822 / DSM 2638 / NCIMB 8403 / VKM B-1763) (Desulfovibrio salexigens).